The sequence spans 305 residues: UPF0612 protein C337.02c (305 aa).

Coiled-coil stretches lie at residues 27 to 63 (IERY…MKYE) and 120 to 207 (NDMN…DARS).

Belongs to the UPF0612 family.

This chain is UPF0612 protein C337.02c, found in Schizosaccharomyces pombe (strain 972 / ATCC 24843) (Fission yeast).